The sequence spans 160 residues: Cytochrome b6-f complex subunit 4 (160 aa).

Helical transmembrane passes span 36–56, 95–115, and 131–151; these read LLYM…SLAV, LIGI…PFIE, and AVFL…TLPI.

This sequence belongs to the cytochrome b family. PetD subfamily. In terms of assembly, the 4 large subunits of the cytochrome b6-f complex are cytochrome b6, subunit IV (17 kDa polypeptide, petD), cytochrome f and the Rieske protein, while the 4 small subunits are petG, petL, petM and petN. The complex functions as a dimer.

The protein resides in the plastid. It localises to the chloroplast thylakoid membrane. Its function is as follows. Component of the cytochrome b6-f complex, which mediates electron transfer between photosystem II (PSII) and photosystem I (PSI), cyclic electron flow around PSI, and state transitions. This is Cytochrome b6-f complex subunit 4 from Bigelowiella natans (Pedinomonas minutissima).